The following is a 207-amino-acid chain: Protein LURP1 (207 aa).

It belongs to the LOR family. As to expression, limited to discrete pathogen infection sites in leaves.

Involved in basal defense against virulent oomycetes. Might be related to the phospholipid scramblase and tubby-like superfamily of membrane tethered transcription factors. This Arabidopsis thaliana (Mouse-ear cress) protein is Protein LURP1 (LURP1).